The chain runs to 70 residues: Conotoxin Im23.4 (70 aa).

Residues 1-22 (MIMRMTLTLFVLVVMTAASASG) form the signal peptide. Residues 23–30 (DALTEAKR) constitute a propeptide that is removed on maturation. Disulfide bonds link cysteine 34-cysteine 41, cysteine 45-cysteine 53, and cysteine 54-cysteine 69.

Belongs to the conotoxin K superfamily. Expressed by the venom duct.

It is found in the secreted. Probable neurotoxin. The sequence is that of Conotoxin Im23.4 from Conus imperialis (Imperial cone).